We begin with the raw amino-acid sequence, 358 residues long: PDZ and LIM domain protein 3 (358 aa).

The 84-residue stretch at 1 to 84 folds into the PDZ domain; the sequence is MPQNVLLPGP…QLCLKIDRAE (84 aa). 2 disordered regions span residues 126–155 and 237–274; these read FILP…SVST and DTEH…RAPV. A compositionally biased stretch (low complexity) spans 129–146; it reads PGRSSGSSTPSGFDPGSG. The region spanning 288-347 is the LIM zinc-binding domain; it reads PICDRCGNGIVGTVVKAKDKLRHPDCFVCSDCNLNLKQKGYFFVEGQLYCEAHARARMRP.

It localises to the cytoplasm. The protein resides in the myofibril. The protein localises to the sarcomere. Its subcellular location is the z line. Functionally, may play a role in the organization of actin filament arrays within muscle cells. The polypeptide is PDZ and LIM domain protein 3 (pdlim3) (Xenopus laevis (African clawed frog)).